The chain runs to 882 residues: Putative HTH-type transcriptional regulator Rv0890c (882 aa).

Positions 814–879 constitute an HTH luxR-type domain; sequence PARGWGSLTP…QLVDEAARRG (66 aa). A DNA-binding region (H-T-H motif) is located at residues 838 to 857; the sequence is NKDIAKRLFVSPRTVQTHLT.

This Mycobacterium tuberculosis (strain ATCC 25618 / H37Rv) protein is Putative HTH-type transcriptional regulator Rv0890c.